Here is a 343-residue protein sequence, read N- to C-terminus: Anthranilate phosphoribosyltransferase (343 aa).

5-phospho-alpha-D-ribose 1-diphosphate-binding positions include G86, 89 to 90 (GD), T94, 96 to 99 (NIST), 114 to 122 (KHGNRSASG), and S126. G86 contributes to the anthranilate binding site. S98 serves as a coordination point for Mg(2+). N117 contributes to the anthranilate binding site. R172 provides a ligand contact to anthranilate. D231 and E232 together coordinate Mg(2+).

The protein belongs to the anthranilate phosphoribosyltransferase family. As to quaternary structure, homodimer. Mg(2+) serves as cofactor.

It catalyses the reaction N-(5-phospho-beta-D-ribosyl)anthranilate + diphosphate = 5-phospho-alpha-D-ribose 1-diphosphate + anthranilate. Its pathway is amino-acid biosynthesis; L-tryptophan biosynthesis; L-tryptophan from chorismate: step 2/5. Catalyzes the transfer of the phosphoribosyl group of 5-phosphorylribose-1-pyrophosphate (PRPP) to anthranilate to yield N-(5'-phosphoribosyl)-anthranilate (PRA). This Synechococcus sp. (strain JA-3-3Ab) (Cyanobacteria bacterium Yellowstone A-Prime) protein is Anthranilate phosphoribosyltransferase.